Here is a 328-residue protein sequence, read N- to C-terminus: Biotin synthase (328 aa).

A Radical SAM core domain is found at 42–267 (YHVQLASLLS…LMPGSRVRLS (226 aa)). [4Fe-4S] cluster is bound by residues Cys-57, Cys-61, and Cys-64. [2Fe-2S] cluster contacts are provided by Cys-101, Cys-133, Cys-193, and Arg-265.

This sequence belongs to the radical SAM superfamily. Biotin synthase family. Homodimer. [4Fe-4S] cluster serves as cofactor. Requires [2Fe-2S] cluster as cofactor.

It carries out the reaction (4R,5S)-dethiobiotin + (sulfur carrier)-SH + 2 reduced [2Fe-2S]-[ferredoxin] + 2 S-adenosyl-L-methionine = (sulfur carrier)-H + biotin + 2 5'-deoxyadenosine + 2 L-methionine + 2 oxidized [2Fe-2S]-[ferredoxin]. It functions in the pathway cofactor biosynthesis; biotin biosynthesis; biotin from 7,8-diaminononanoate: step 2/2. Functionally, catalyzes the conversion of dethiobiotin (DTB) to biotin by the insertion of a sulfur atom into dethiobiotin via a radical-based mechanism. This chain is Biotin synthase, found in Synechococcus sp. (strain CC9311).